The sequence spans 141 residues: Hemoglobin subunit alpha-1 (141 aa).

Residues 1–141 (VLTEDDKNHI…VAKTLVAHYR (141 aa)) enclose the Globin domain. Residue His-58 participates in O2 binding. His-87 contacts heme b.

It belongs to the globin family. Heterotetramer of two alpha chains and two beta chains. In terms of tissue distribution, red blood cells.

Functionally, involved in oxygen transport from the lung to the various peripheral tissues. The polypeptide is Hemoglobin subunit alpha-1 (Iguana iguana (Common iguana)).